Here is a 379-residue protein sequence, read N- to C-terminus: Homoserine O-succinyltransferase (379 aa).

The AB hydrolase-1 domain occupies 51-360; that stretch reads NAVLICHALS…DAPQGHDAFL (310 aa). Residue Ser-157 is the Nucleophile of the active site. Residue Arg-227 participates in substrate binding. Residues Asp-323 and His-356 contribute to the active site. Asp-357 lines the substrate pocket.

The protein belongs to the AB hydrolase superfamily. MetX family. Homodimer.

The protein localises to the cytoplasm. The catalysed reaction is L-homoserine + succinyl-CoA = O-succinyl-L-homoserine + CoA. Its pathway is amino-acid biosynthesis; L-methionine biosynthesis via de novo pathway; O-succinyl-L-homoserine from L-homoserine: step 1/1. Its function is as follows. Transfers a succinyl group from succinyl-CoA to L-homoserine, forming succinyl-L-homoserine. This chain is Homoserine O-succinyltransferase, found in Stutzerimonas stutzeri (strain A1501) (Pseudomonas stutzeri).